Reading from the N-terminus, the 798-residue chain is Cold shock domain-containing protein E1 (798 aa).

In terms of domain architecture, CSD 1 spans E26–L87. Position 81 is an N6-acetyllysine (K81). A Glycyl lysine isopeptide (Lys-Gly) (interchain with G-Cter in SUMO2) cross-link involves residue K91. S123 is subject to Phosphoserine. The region spanning V136–L179 is the CSD 2; truncated domain. Positions Y186–V245 constitute a CSD 3 domain. At S276 the chain carries Phosphoserine. A CSD 4; truncated domain is found at L297–L337. CSD domains are found at residues E349–I410 and N447–V507. At S514 the chain carries Phosphoserine. Residues L519–V579 enclose the CSD 7 domain. S584 is modified (phosphoserine). 2 CSD domains span residues P610–I670 and R674–V735. The region spanning P748–R789 is the SUZ-C domain. At T761 the chain carries Phosphothreonine.

It belongs to the UNR family. Component of a multi subunit autoregulatory ribonucleoprotein complex (ARC), at least composed of IGF2BP1, PABPC1 and CSDE1. Interacts with STRAP. Part of a complex associated with the FOS mCRD domain and consisting of PABPC1, PAIP1, HNRPD and SYNCRIP. The interaction with PABPC1 is direct and RNA-independent. Interacts with EIF4ENIF1/4E-T.

The protein resides in the cytoplasm. It localises to the stress granule. Its subcellular location is the P-body. RNA-binding protein involved in translationally coupled mRNA turnover. Implicated with other RNA-binding proteins in the cytoplasmic deadenylation/translational and decay interplay of the FOS mRNA mediated by the major coding-region determinant of instability (mCRD) domain. Required for efficient formation of stress granules. In Rattus norvegicus (Rat), this protein is Cold shock domain-containing protein E1.